A 143-amino-acid chain; its full sequence is Transcriptional regulator MraZ (143 aa).

SpoVT-AbrB domains follow at residues Thr-5–Glu-47 and Ala-76–Ala-119.

The protein belongs to the MraZ family. In terms of assembly, forms oligomers.

Its subcellular location is the cytoplasm. The protein localises to the nucleoid. The polypeptide is Transcriptional regulator MraZ (Corynebacterium glutamicum (strain R)).